Reading from the N-terminus, the 367-residue chain is D-alanine--D-alanine ligase (367 aa).

Residues 148-357 (KMAFEQAGLP…FPELVDKLVQ (210 aa)) enclose the ATP-grasp domain. 184 to 239 (EASLGYPCFVKPANLGSSVGISKVRSRQELEDALDNAANYDRRIIVEAGVVAREVE) contributes to the ATP binding site. Positions 310, 324, and 326 each coordinate Mg(2+).

The protein belongs to the D-alanine--D-alanine ligase family. Mg(2+) serves as cofactor. Requires Mn(2+) as cofactor.

Its subcellular location is the cytoplasm. The catalysed reaction is 2 D-alanine + ATP = D-alanyl-D-alanine + ADP + phosphate + H(+). It functions in the pathway cell wall biogenesis; peptidoglycan biosynthesis. Functionally, cell wall formation. The chain is D-alanine--D-alanine ligase from Trichormus variabilis (strain ATCC 29413 / PCC 7937) (Anabaena variabilis).